The sequence spans 832 residues: MQKIYNHQNVEDGIESKWREKKYFIDHNLDKKPFSILLPPPNVTGKLHLGHALDSYIPDTIIRFKKLSGYDVLWLPGMDHAGIATQSKVESELYKQNKLTRHDLGKEKFLAEVWKWKEIHEKLFRQQWQTLGLALDYSNEAFTLSKEVNEKVIKIFVELYNRGYIYKKNRAVSWDINLQTAISNIEVINKETPQKMYYIKYFFENSSEYLTIATTRVETMLSDVAVIANPKDKRYKNLKIKFLIHPITKKRLPLIFDEYVKIKFGSGLMKLSAHAEADIEIIEKLGLEVIETIDKNGYINAPDYQWHKMERFEAREKMAQFLEENNYLIKAEDSISNVSYSDRSNSVIETLMLPQWFIKMDHFRDLILKNLSSKEKIKFLPNRYKNNLKRWMNNVYDWNISRQLWWGHQIPAWYKDGKMKVQAESPGQGWVQDSDVLDTWFSSGIAAFSFFKWENDDAFFKRYYPSSLMVSGYDLIFFWISRMIFLSLEFTNQRPFKEVFMHGLIRDKDGRKMSKSLNNGIDPIEVVEKYGSDALRWFLITNTAPGMDIRYNQEKIESAWKISNKLYNVALYISSMPDNNLEAKSSKLSEQSKWILNKLSALNKQIQKVFKTYDFSIIGVEIYQFIFTDLSSWYIELIKSLNIKNEAMYVFKKILIMLHPFLPFTSDYLFNKLYNEELLEQSWPKFKRFKDSSEINLLIDAITKIRKYRDDNNISKKEKLYLCLKEKISKKNLNILLSLTNSEYKENKDFLIVLDNNSIFIEISQEQKQKQKQELEKKIAFCQSEITRAQNILSNQSFIAKAPKEKIKLEEDKLQRYKQELQIYLEELKWKY.

The 'HIGH' region motif lies at 41–51; it reads PNVTGKLHLGH. Residues 512 to 516 carry the 'KMSKS' region motif; the sequence is KMSKS. Lys-515 is an ATP binding site. The stretch at 760–831 forms a coiled coil; sequence FIEISQEQKQ…QIYLEELKWK (72 aa).

The protein belongs to the class-I aminoacyl-tRNA synthetase family. ValS type 1 subfamily. Monomer.

The protein localises to the cytoplasm. It carries out the reaction tRNA(Val) + L-valine + ATP = L-valyl-tRNA(Val) + AMP + diphosphate. Catalyzes the attachment of valine to tRNA(Val). As ValRS can inadvertently accommodate and process structurally similar amino acids such as threonine, to avoid such errors, it has a 'posttransfer' editing activity that hydrolyzes mischarged Thr-tRNA(Val) in a tRNA-dependent manner. The polypeptide is Valine--tRNA ligase (Mycoplasmopsis synoviae (strain 53) (Mycoplasma synoviae)).